An 851-amino-acid polypeptide reads, in one-letter code: Leucine--tRNA ligase (851 aa).

Positions P51–H61 match the 'HIGH' region motif. The 'KMSKS' region signature appears at K615–S619. K618 contacts ATP.

Belongs to the class-I aminoacyl-tRNA synthetase family.

It is found in the cytoplasm. The enzyme catalyses tRNA(Leu) + L-leucine + ATP = L-leucyl-tRNA(Leu) + AMP + diphosphate. This is Leucine--tRNA ligase from Clavibacter michiganensis subsp. michiganensis (strain NCPPB 382).